An 80-amino-acid chain; its full sequence is Large ribosomal subunit protein uL24 (80 aa).

The segment at His53–Ser80 is disordered.

The protein belongs to the universal ribosomal protein uL24 family. Part of the 50S ribosomal subunit.

One of two assembly initiator proteins, it binds directly to the 5'-end of the 23S rRNA, where it nucleates assembly of the 50S subunit. Its function is as follows. One of the proteins that surrounds the polypeptide exit tunnel on the outside of the subunit. In Chlorobium luteolum (strain DSM 273 / BCRC 81028 / 2530) (Pelodictyon luteolum), this protein is Large ribosomal subunit protein uL24.